Reading from the N-terminus, the 242-residue chain is ATP synthase subunit a (242 aa).

6 helical membrane passes run 31–51 (IYML…FYNW), 84–104 (FIPL…LGMT), 114–134 (IIVT…VGFV), 140–160 (FLTL…MIVI), 189–209 (VIAS…IPLM), and 210–230 (VILI…FTIL).

Belongs to the ATPase A chain family. In terms of assembly, F-type ATPases have 2 components, CF(1) - the catalytic core - and CF(0) - the membrane proton channel. CF(1) has five subunits: alpha(3), beta(3), gamma(1), delta(1), epsilon(1). CF(0) has three main subunits: a(1), b(2) and c(9-12). The alpha and beta chains form an alternating ring which encloses part of the gamma chain. CF(1) is attached to CF(0) by a central stalk formed by the gamma and epsilon chains, while a peripheral stalk is formed by the delta and b chains.

The protein localises to the cell inner membrane. Functionally, key component of the proton channel; it plays a direct role in the translocation of protons across the membrane. In Rickettsia canadensis (strain McKiel), this protein is ATP synthase subunit a.